Here is a 461-residue protein sequence, read N- to C-terminus: Transforming growth factor beta-1-induced transcript 1 protein (461 aa).

Methionine 1 bears the N-acetylmethionine mark. Residues 1–86 form a disordered region; the sequence is MEDLDALLSD…PPFSSSSGVL (86 aa). The segment at 1 to 200 is transcription activation; the sequence is MEDLDALLSD…GCPSPPGQTN (200 aa). The segment at 1–240 is interaction with PTK2B/PYK2; sequence MEDLDALLSD…CNKPIAGQVV (240 aa). The LD motif 1 signature appears at 3 to 15; the sequence is DLDALLSDLETTT. Threonine 33 is subject to Phosphothreonine. Tyrosine 38 carries the post-translational modification Phosphotyrosine. Residues 41-52 are compositionally biased toward polar residues; that stretch reads QPQTGSGESSGA. Phosphotyrosine; by FAK2 and FYN is present on tyrosine 60. Serine 68 carries the post-translational modification Phosphoserine. Residues 69–83 show a composition bias toward low complexity; the sequence is PKSVAPVAPPFSSSS. An interaction with PTK2/FAK1 region spans residues 83-136; sequence SGVLGNGLCELDRLLQELNATQFNITDEIMSQFPSSKMAEGEGKEDQSEDKSIT. An LD motif 2 motif is present at residues 92-104; the sequence is ELDRLLQELNATQ. Positions 116 to 154 are disordered; the sequence is PSSKMAEGEGKEDQSEDKSITTVPSSTFPAPSKPSATSA. The span at 121–134 shows a compositional bias: basic and acidic residues; sequence AEGEGKEDQSEDKS. Polar residues predominate over residues 135 to 154; sequence ITTVPSSTFPAPSKPSATSA. Serine 140, serine 141, serine 164, and serine 186 each carry phosphoserine. The LD motif 3 motif lies at 157–168; the sequence is ELDRLMASLSDF. The segment at 171–204 is disordered; the sequence is QNHLPASGPPQPPAVSPTREGCPSPPGQTNKGSL. Phosphothreonine is present on threonine 188. Residue serine 194 is modified to Phosphoserine. The LD motif 4 motif lies at 203–215; sequence SLDTMLGLLQSDL. LIM zinc-binding domains are found at residues 226 to 285, 286 to 343, 344 to 403, and 404 to 461; these read GLCG…RFSP, RCGF…QLFA, PRCQ…QRGS, and LCAT…KLFG. Position 403 is a phosphoserine (serine 403). Threonine 407 carries the post-translational modification Phosphothreonine.

Belongs to the paxillin family. In terms of assembly, homooligomer. Interacts with PPARG. Interacts with TRAF4. Interacts with CRIP2. Interacts with HSPB1. Interacts with ILK. Interacts with LIMS1 and LIMS2. Interacts with NCK2. Interacts with NUDT16L1. Interacts with PAK. Interacts with PTPN12. Interacts with TCF3. Interacts with TCF7L2. Interacts with VCL. Interacts (via LD motif 3) with GIT1. Also interacts with GIT2. Forms a complex with ARHGEF7. Interacts with AR/androgen receptor in a ligand-dependent manner. Interacts with CSK. Interacts with PTK2/FAK1 and PTK2B/PYK2. Interacts with SLC6A3 and SLC6A4. Interacts with NR3C1. Interacts with SMAD3. Interacts with MAPK15. Interacts with SRC. Interacts with LYN. Interacts with talin. Interacts (via LIM zinc-binding domain 2) with CBLC (via RING-type zinc finger); the interaction is direct and enhances CBLC E3 ubiquitin-protein ligase activity. Interacts with PARVA. Interacts with PXN. Post-translationally, phosphorylated by gonadotropin-releasing hormone-activated SRC. In terms of tissue distribution, strongly expressed in large intestine, lung, spleen, testis, uterus and to a lower extent in brain, kidney and liver (at protein level). In brain, expressed by neuronal and non neuronal cells (at protein level).

It is found in the cell junction. It localises to the focal adhesion. Its subcellular location is the nucleus matrix. The protein localises to the cytoplasm. The protein resides in the cytoskeleton. Its function is as follows. Functions as a molecular adapter coordinating multiple protein-protein interactions at the focal adhesion complex and in the nucleus. Links various intracellular signaling modules to plasma membrane receptors and regulates the Wnt and TGFB signaling pathways. May also regulate SLC6A3 and SLC6A4 targeting to the plasma membrane hence regulating their activity. In the nucleus, functions as a nuclear receptor coactivator regulating glucocorticoid, androgen, mineralocorticoid and progesterone receptor transcriptional activity. May play a role in the processes of cell growth, proliferation, migration, differentiation and senescence. May have a zinc-dependent DNA-binding activity. The protein is Transforming growth factor beta-1-induced transcript 1 protein (Tgfb1i1) of Rattus norvegicus (Rat).